A 250-amino-acid polypeptide reads, in one-letter code: Pyrroloquinoline-quinone synthase (250 aa).

It belongs to the PqqC family.

The catalysed reaction is 6-(2-amino-2-carboxyethyl)-7,8-dioxo-1,2,3,4,7,8-hexahydroquinoline-2,4-dicarboxylate + 3 O2 = pyrroloquinoline quinone + 2 H2O2 + 2 H2O + H(+). It participates in cofactor biosynthesis; pyrroloquinoline quinone biosynthesis. Ring cyclization and eight-electron oxidation of 3a-(2-amino-2-carboxyethyl)-4,5-dioxo-4,5,6,7,8,9-hexahydroquinoline-7,9-dicarboxylic-acid to PQQ. The polypeptide is Pyrroloquinoline-quinone synthase (Xanthomonas axonopodis pv. citri (strain 306)).